The chain runs to 667 residues: Sorting nexin mvp1 (667 aa).

Residues 221-268 form a disordered region; sequence AGNLHSQQPPKFSVDSSVDDNAITPRKPFSKIPNRLSPSTQPLLSNSR. Residues 224–236 are compositionally biased toward polar residues; that stretch reads LHSQQPPKFSVDS. Residues 279–398 form the PX domain; sequence TSFPASLEMN…RVFFTEPNVF (120 aa). Arginine 320, serine 322, and lysine 346 together coordinate a 1,2-diacyl-sn-glycero-3-phospho-(1D-myo-inositol-3-phosphate). The tract at residues 574-594 is disordered; sequence ANSDESGRNRTFLNRSSKKRA.

This sequence belongs to the sorting nexin family. As to quaternary structure, homodimer. Forms an autoinhibited tetramer consisting of 2 homodimers that self-interact, wherein the membrane-interacting BAR surfaces are sequestered and the PX lipid-binding sites are occluded. Interacts with Vps1.

It is found in the cytoplasm. Its subcellular location is the endosome membrane. Its function is as follows. Required for vacuolar protein sorting. Component of the retromer-mediated endosome-to-Golgi retrograde pathway. Required for efficient cargo export from the endosome, promoting Vps1-mediated fission of retromer-coated tubules that bud from the endosome. In Schizosaccharomyces pombe (strain 972 / ATCC 24843) (Fission yeast), this protein is Sorting nexin mvp1 (mvp1).